A 655-amino-acid chain; its full sequence is Very long-chain specific acyl-CoA dehydrogenase, mitochondrial (655 aa).

Residues 1 to 40 (MQAARMAASLGRQLLRLGGGSSRLTALLGQPRPGPARRPY) constitute a mitochondrion transit peptide. The disordered stretch occupies residues 23–42 (RLTALLGQPRPGPARRPYAG). Residues 41–482 (AGGAAQLALD…ALQGCMDKGK (442 aa)) are catalytic. The residue at position 51 (K51) is an N6-acetyllysine. K71 bears the N6-acetyllysine; alternate mark. K71 carries the N6-succinyllysine; alternate modification. The residue at position 195 (K195) is an N6-succinyllysine. 214–223 (FCLTEPSSGS) provides a ligand contact to FAD. The residue at position 237 (C237) is an S-nitrosocysteine. The residue at position 239 (K239) is an N6-acetyllysine; alternate. Residue K239 is modified to N6-succinyllysine; alternate. Position 249-251 (249-251 (WIS)) interacts with FAD. N6-acetyllysine; alternate is present on residues K276 and K278. Residues K276 and K278 each carry the N6-succinyllysine; alternate modification. N6-acetyllysine is present on K298. An N6-acetyllysine; alternate modification is found at K331. Residue K331 is modified to N6-succinyllysine; alternate. The residue at position 372 (K372) is an N6-succinyllysine. 461–463 (FEG) lines the substrate pocket. The active-site Proton acceptor is E462. Position 464–466 (464–466 (TND)) interacts with FAD. K482 is modified (N6-acetyllysine; alternate). Residue K482 is modified to N6-succinyllysine; alternate. The membrane-anchoring stretch occupies residues 483 to 516 (ELSGLGSALKNPFGNAGLLLGEAGKQLRRRAGLG). S517 and S522 each carry phosphoserine. The residue at position 550 (K550) is an N6-acetyllysine. Position 556 is an N6-acetyllysine; alternate (K556). An N6-succinyllysine; alternate modification is found at K556. Residue Q562 coordinates FAD. K639 carries the N6-succinyllysine modification.

This sequence belongs to the acyl-CoA dehydrogenase family. In terms of assembly, homodimer. Homodimerizes after import into the mitochondrion. FAD is required as a cofactor. In terms of processing, S-nitrosylation at Cys-237 in liver improves catalytic efficiency. In terms of tissue distribution, predominantly expressed in heart and skeletal muscle (at protein level). Also detected in kidney and liver (at protein level).

It localises to the mitochondrion inner membrane. It carries out the reaction a very-long-chain 2,3-saturated fatty acyl-CoA + oxidized [electron-transfer flavoprotein] + H(+) = a very-long-chain (2E)-enoyl-CoA + reduced [electron-transfer flavoprotein]. The catalysed reaction is decanoyl-CoA + oxidized [electron-transfer flavoprotein] + H(+) = (2E)-decenoyl-CoA + reduced [electron-transfer flavoprotein]. It catalyses the reaction dodecanoyl-CoA + oxidized [electron-transfer flavoprotein] + H(+) = (2E)-dodecenoyl-CoA + reduced [electron-transfer flavoprotein]. The enzyme catalyses tetradecanoyl-CoA + oxidized [electron-transfer flavoprotein] + H(+) = (2E)-tetradecenoyl-CoA + reduced [electron-transfer flavoprotein]. It carries out the reaction oxidized [electron-transfer flavoprotein] + hexadecanoyl-CoA + H(+) = (2E)-hexadecenoyl-CoA + reduced [electron-transfer flavoprotein]. The catalysed reaction is octadecanoyl-CoA + oxidized [electron-transfer flavoprotein] + H(+) = (2E)-octadecenoyl-CoA + reduced [electron-transfer flavoprotein]. It catalyses the reaction eicosanoyl-CoA + oxidized [electron-transfer flavoprotein] + H(+) = (2E)-eicosenoyl-CoA + reduced [electron-transfer flavoprotein]. The enzyme catalyses docosanoyl-CoA + oxidized [electron-transfer flavoprotein] + H(+) = (2E)-docosenoyl-CoA + reduced [electron-transfer flavoprotein]. It carries out the reaction tetracosanoyl-CoA + oxidized [electron-transfer flavoprotein] + H(+) = (2E)-tetracosenoyl-CoA + reduced [electron-transfer flavoprotein]. The catalysed reaction is (9Z)-hexadecenoyl-CoA + oxidized [electron-transfer flavoprotein] + H(+) = (2E,9Z)-hexadecadienoyl-CoA + reduced [electron-transfer flavoprotein]. It catalyses the reaction oxidized [electron-transfer flavoprotein] + (9Z)-octadecenoyl-CoA + H(+) = (2E,9Z)-octadecadienoyl-CoA + reduced [electron-transfer flavoprotein]. Its pathway is lipid metabolism; mitochondrial fatty acid beta-oxidation. Its function is as follows. Very long-chain specific acyl-CoA dehydrogenase is one of the acyl-CoA dehydrogenases that catalyze the first step of mitochondrial fatty acid beta-oxidation, an aerobic process breaking down fatty acids into acetyl-CoA and allowing the production of energy from fats. The first step of fatty acid beta-oxidation consists in the removal of one hydrogen from C-2 and C-3 of the straight-chain fatty acyl-CoA thioester, resulting in the formation of trans-2-enoyl-CoA. Among the different mitochondrial acyl-CoA dehydrogenases, very long-chain specific acyl-CoA dehydrogenase acts specifically on acyl-CoAs with saturated 12 to 24 carbons long primary chains. The protein is Very long-chain specific acyl-CoA dehydrogenase, mitochondrial of Homo sapiens (Human).